The primary structure comprises 362 residues: 3-dehydroquinate synthase (362 aa).

NAD(+)-binding positions include 71–76, 105–109, 129–130, Lys-142, Lys-151, and 169–172; these read DGEQYK, GVVGD, TT, and CLKT. The Zn(2+) site is built by Glu-184, His-247, and His-264.

Belongs to the sugar phosphate cyclases superfamily. Dehydroquinate synthase family. Co(2+) is required as a cofactor. The cofactor is Zn(2+). Requires NAD(+) as cofactor.

The protein localises to the cytoplasm. It carries out the reaction 7-phospho-2-dehydro-3-deoxy-D-arabino-heptonate = 3-dehydroquinate + phosphate. It functions in the pathway metabolic intermediate biosynthesis; chorismate biosynthesis; chorismate from D-erythrose 4-phosphate and phosphoenolpyruvate: step 2/7. Catalyzes the conversion of 3-deoxy-D-arabino-heptulosonate 7-phosphate (DAHP) to dehydroquinate (DHQ). The sequence is that of 3-dehydroquinate synthase from Shigella dysenteriae serotype 1 (strain Sd197).